The primary structure comprises 34 residues: Cycloamanide E proprotein (34 aa).

Residues 1–10 constitute a propeptide that is removed on maturation; the sequence is MSDINAARLP. The segment at residues 11 to 17 is a cross-link (cyclopeptide (Ser-Pro)); sequence SFFFPVP. The propeptide occupies 18 to 34; sequence CISDDIEMVLTRGESLC.

Belongs to the MSDIN fungal toxin family. Processed by the macrocyclase-peptidase enzyme POPB to yield a cyclic decapeptide. POPB first removes 10 residues from the N-terminus. Conformational trapping of the remaining peptide forces the enzyme to release this intermediate rather than proceed to macrocyclization. The enzyme rebinds the remaining peptide in a different conformation and catalyzes macrocyclization of the N-terminal 7 residues.

Its function is as follows. Cyclic heptapeptide that belongs to the MSDIN-like toxin family responsible for a large number of food poisoning cases and deaths. Cycloaminide E is structurally related to other cycloamanides that are non-toxic to mammals but show immunosuppressive activity. The chain is Cycloamanide E proprotein from Amanita phalloides (Death cap).